The following is an 803-amino-acid chain: Translation initiation factor IF-2 (803 aa).

2 disordered regions span residues 95–125 (PVVEQKRETEPAPTQEVPLTSDTTNLNEKAE) and 138–178 (EVKE…EREE). A compositionally biased stretch (polar residues) spans 111–121 (VPLTSDTTNLN). Residues 138 to 155 (EVKEEAKKTPSEKKETPK) show a composition bias toward basic and acidic residues. A compositionally biased stretch (basic residues) spans 156–167 (KGPRKETRRSRK). The span at 168–178 (PDKEDKWEREE) shows a compositional bias: basic and acidic residues. Positions 302–471 (PRAPVVTIMG…LLQAEVLELK (170 aa)) constitute a tr-type G domain. The tract at residues 311–318 (GHVDHGKT) is G1. 311 to 318 (GHVDHGKT) is a GTP binding site. Positions 336 to 340 (GITQH) are G2. Positions 357–360 (DTPG) are G3. GTP is bound by residues 357–361 (DTPGH) and 411–414 (NKID). Residues 411-414 (NKID) are G4. A G5 region spans residues 447 to 449 (SAK).

This sequence belongs to the TRAFAC class translation factor GTPase superfamily. Classic translation factor GTPase family. IF-2 subfamily.

The protein resides in the cytoplasm. Functionally, one of the essential components for the initiation of protein synthesis. Protects formylmethionyl-tRNA from spontaneous hydrolysis and promotes its binding to the 30S ribosomal subunits. Also involved in the hydrolysis of GTP during the formation of the 70S ribosomal complex. This chain is Translation initiation factor IF-2, found in Coxiella burnetii (strain RSA 331 / Henzerling II).